The chain runs to 200 residues: 3-isopropylmalate dehydratase small subunit (200 aa).

It belongs to the LeuD family. LeuD type 1 subfamily. In terms of assembly, heterodimer of LeuC and LeuD.

It catalyses the reaction (2R,3S)-3-isopropylmalate = (2S)-2-isopropylmalate. It participates in amino-acid biosynthesis; L-leucine biosynthesis; L-leucine from 3-methyl-2-oxobutanoate: step 2/4. Its function is as follows. Catalyzes the isomerization between 2-isopropylmalate and 3-isopropylmalate, via the formation of 2-isopropylmaleate. The protein is 3-isopropylmalate dehydratase small subunit of Vibrio vulnificus (strain CMCP6).